The primary structure comprises 562 residues: Urocanate hydratase (562 aa).

Residues 52 to 53 (GG), Gln-130, 176 to 178 (GMG), Glu-196, Arg-201, 242 to 243 (NA), 263 to 267 (QTSAH), 273 to 274 (YL), and Tyr-322 contribute to the NAD(+) site. The active site involves Cys-410. Gly-492 contacts NAD(+).

This sequence belongs to the urocanase family. The cofactor is NAD(+).

The protein localises to the cytoplasm. It catalyses the reaction 4-imidazolone-5-propanoate = trans-urocanate + H2O. It participates in amino-acid degradation; L-histidine degradation into L-glutamate; N-formimidoyl-L-glutamate from L-histidine: step 2/3. In terms of biological role, catalyzes the conversion of urocanate to 4-imidazolone-5-propionate. The sequence is that of Urocanate hydratase from Klebsiella pneumoniae (strain 342).